The primary structure comprises 199 residues: Charged multivesicular body protein 1b (199 aa).

Coiled coils occupy residues 15–42 (AKEL…AIQK) and 178–199 (TSVA…RDQV). Residues 167–199 (ELPQGQTGSVGTSVASTEQDELSQRLARLRDQV) are disordered. The span at 170–183 (QGQTGSVGTSVAST) shows a compositional bias: polar residues. Residues 186 to 196 (DELSQRLARLR) carry the MIT-interacting motif motif.

Belongs to the SNF7 family.

The protein localises to the cytoplasm. The protein resides in the cytosol. Its subcellular location is the endosome. It localises to the late endosome membrane. Its function is as follows. Probable peripherally associated component of the endosomal sorting required for transport complex III (ESCRT-III) which is involved in multivesicular bodies (MVBs) formation and sorting of endosomal cargo proteins into MVBs. MVBs contain intraluminal vesicles (ILVs) that are generated by invagination and scission from the limiting membrane of the endosome and mostly are delivered to lysosomes enabling degradation of membrane proteins, such as stimulated growth factor receptors, lysosomal enzymes and lipids. The protein is Charged multivesicular body protein 1b (chmp1b) of Xenopus tropicalis (Western clawed frog).